Consider the following 793-residue polypeptide: Phenylalanine--tRNA ligase beta subunit (793 aa).

Residues Ala39–His148 form the tRNA-binding domain. The 76-residue stretch at Pro401–Ser476 folds into the B5 domain. Mg(2+) is bound by residues Asp454, Asp460, Glu463, and Glu464. Residues Ser699–Arg792 enclose the FDX-ACB domain.

The protein belongs to the phenylalanyl-tRNA synthetase beta subunit family. Type 1 subfamily. In terms of assembly, tetramer of two alpha and two beta subunits. Mg(2+) is required as a cofactor.

The protein localises to the cytoplasm. It catalyses the reaction tRNA(Phe) + L-phenylalanine + ATP = L-phenylalanyl-tRNA(Phe) + AMP + diphosphate + H(+). The polypeptide is Phenylalanine--tRNA ligase beta subunit (Nitrosococcus oceani (strain ATCC 19707 / BCRC 17464 / JCM 30415 / NCIMB 11848 / C-107)).